A 323-amino-acid chain; its full sequence is Homoserine kinase (323 aa).

It belongs to the pseudomonas-type ThrB family.

It carries out the reaction L-homoserine + ATP = O-phospho-L-homoserine + ADP + H(+). The protein operates within amino-acid biosynthesis; L-threonine biosynthesis; L-threonine from L-aspartate: step 4/5. This chain is Homoserine kinase, found in Phenylobacterium zucineum (strain HLK1).